Reading from the N-terminus, the 229-residue chain is MAKLTKRMKAIKAGVDSTKQYEINEAITVLKQFTSTKFVESVDVAVNLGIDARKSDQNVRGATVLPHGTGRSVRVAVFTQGANVDSAKAAGADLVGMEDLAEQIKKGEMNFDVVIASPDAMRVVGQLGQILGPRGLMPNPKVGTVTPNVAEAVKNAKSGQIRYRNDKNGIIHTTIGKANFSAEQLKENLQALLAALTKAKPATAKGIFIRKVSVSTTQGAGVAVDQSSL.

This sequence belongs to the universal ribosomal protein uL1 family. In terms of assembly, part of the 50S ribosomal subunit.

Binds directly to 23S rRNA. The L1 stalk is quite mobile in the ribosome, and is involved in E site tRNA release. Functionally, protein L1 is also a translational repressor protein, it controls the translation of the L11 operon by binding to its mRNA. The chain is Large ribosomal subunit protein uL1 from Histophilus somni (strain 2336) (Haemophilus somnus).